The primary structure comprises 65 residues: Large ribosomal subunit protein bL35 (65 aa).

Residues 1-16 (MPKQKTHRASAKRFKR) show a composition bias toward basic residues. The segment at 1-20 (MPKQKTHRASAKRFKRTGSG) is disordered.

The protein belongs to the bacterial ribosomal protein bL35 family.

This is Large ribosomal subunit protein bL35 from Streptococcus equi subsp. equi (strain 4047).